The primary structure comprises 386 residues: tRNA-specific 2-thiouridylase MnmA (386 aa).

ATP is bound by residues 9–16 (GMSGGVDS) and Met-35. An interaction with target base in tRNA region spans residues 95-97 (NPD). Cys-100 functions as the Nucleophile in the catalytic mechanism. The cysteines at positions 100 and 196 are disulfide-linked. Residue Gly-124 participates in ATP binding. Positions 146 to 148 (KDQ) are interaction with tRNA. Cys-196 acts as the Cysteine persulfide intermediate in catalysis. The segment at 308-309 (RY) is interaction with tRNA.

The protein belongs to the MnmA/TRMU family.

Its subcellular location is the cytoplasm. It catalyses the reaction S-sulfanyl-L-cysteinyl-[protein] + uridine(34) in tRNA + AH2 + ATP = 2-thiouridine(34) in tRNA + L-cysteinyl-[protein] + A + AMP + diphosphate + H(+). Its function is as follows. Catalyzes the 2-thiolation of uridine at the wobble position (U34) of tRNA, leading to the formation of s(2)U34. In Burkholderia thailandensis (strain ATCC 700388 / DSM 13276 / CCUG 48851 / CIP 106301 / E264), this protein is tRNA-specific 2-thiouridylase MnmA.